The following is a 343-amino-acid chain: Pentatricopeptide repeat-containing protein At1g06270 (343 aa).

PPR repeat units follow at residues 98–133 (PKIVYSSLLTYCLQSSDPLPLSFAILQRTLRSGCLP), 134–169 (NPQTHLLLSDAWLERRRGSQSVADIINEMKLIGYSP), 170–204 (DTGTCNYLVSSLCAVDKLDEAIKVVEEMSAAGCIP), 205–240 (DVESYGAVINSLCLARKTTDVVKIVKEMVSKAGISP), 241–275 (RKGMLTKVAAALRANREIWKAIEMIEFVESRDYPV), and 276–310 (EFESYEVVVEGCLEVREYILAGKVVMRMTDRGFIP).

This sequence belongs to the PPR family. P subfamily.

The sequence is that of Pentatricopeptide repeat-containing protein At1g06270 from Arabidopsis thaliana (Mouse-ear cress).